Consider the following 323-residue polypeptide: tRNA U34 carboxymethyltransferase (323 aa).

Residues K91, W105, K110, G130, 181–182 (IE), M196, Y200, and R315 each bind carboxy-S-adenosyl-L-methionine.

This sequence belongs to the class I-like SAM-binding methyltransferase superfamily. CmoB family. As to quaternary structure, homotetramer.

The enzyme catalyses carboxy-S-adenosyl-L-methionine + 5-hydroxyuridine(34) in tRNA = 5-carboxymethoxyuridine(34) in tRNA + S-adenosyl-L-homocysteine + H(+). Catalyzes carboxymethyl transfer from carboxy-S-adenosyl-L-methionine (Cx-SAM) to 5-hydroxyuridine (ho5U) to form 5-carboxymethoxyuridine (cmo5U) at position 34 in tRNAs. The chain is tRNA U34 carboxymethyltransferase from Enterobacter sp. (strain 638).